The sequence spans 485 residues: Hemolysin (485 aa).

A signal peptide spans 1 to 28 (MKNFKGRKFLTCVLVSLCTLNYSSISFA). The next 4 membrane-spanning stretches (beta stranded) occupy residues 196–209 (KAQI…NAKY), 216–225 (IDFNAVANGE), 294–303 (SKDVQAAFKA), and 311–323 (ETSG…FEES). The Conserved undecapeptide motif lies at 465–475 (ECTGLAWEWWR).

The protein belongs to the cholesterol-dependent cytolysin family. As to quaternary structure, homooligomeric pore complex of 35 to 50 subunits; when inserted in the host membrane.

It is found in the secreted. The protein resides in the host cell membrane. In terms of biological role, a cholesterol-dependent toxin with hemolytic activity against host red blood cells. Causes cytolysis by forming pores in cholesterol containing host membranes. binding to target membranes, the protein undergoes a major conformation change, leading to its insertion in the host membrane and formation of an oligomeric pore complex. Cholesterol is required for binding to host membranes, membrane insertion and pore formation; cholesterol binding is mediated by a Thr-Leu pair in the C-terminus. Can be reversibly inactivated by oxidation. The polypeptide is Hemolysin (Bacillus cereus).